The following is an 841-amino-acid chain: DNA mismatch repair protein MutS (841 aa).

Residue Gly-600–Ser-607 participates in ATP binding.

Belongs to the DNA mismatch repair MutS family.

Functionally, this protein is involved in the repair of mismatches in DNA. It is possible that it carries out the mismatch recognition step. This protein has a weak ATPase activity. This is DNA mismatch repair protein MutS from Carboxydothermus hydrogenoformans (strain ATCC BAA-161 / DSM 6008 / Z-2901).